A 120-amino-acid chain; its full sequence is Myohemerythrin (120 aa).

Residues histidine 26, histidine 56, glutamate 60, histidine 75, histidine 79, histidine 108, and aspartate 113 each contribute to the Fe cation site.

It belongs to the hemerythrin family.

Myohemerythrin is an oxygen-binding protein found in the retractor muscles of certain worms. The oxygen-binding site contains two iron atoms. This is Myohemerythrin from Riftia pachyptila (Vent tube worm).